The primary structure comprises 123 residues: Glycine cleavage system H protein (123 aa).

Residues 23 to 104 enclose the Lipoyl-binding domain; sequence HWLAGITDHA…PYDAWIFSFE (82 aa). Lysine 64 is subject to N6-lipoyllysine.

Belongs to the GcvH family. In terms of assembly, the glycine cleavage system is composed of four proteins: P, T, L and H. (R)-lipoate serves as cofactor.

The glycine cleavage system catalyzes the degradation of glycine. The H protein shuttles the methylamine group of glycine from the P protein to the T protein. The polypeptide is Glycine cleavage system H protein (Methylobacillus flagellatus (strain ATCC 51484 / DSM 6875 / VKM B-1610 / KT)).